We begin with the raw amino-acid sequence, 650 residues long: NAC domain-containing protein 54 (650 aa).

An NAC domain is found at 6 to 156 (LPPGFRFHPT…AYALCRVFKK (151 aa)). The DNA-binding element occupies 105-162 (VGMKKTLVYYRGRAPHGSRTDWVMHEYRLDERECETDTGLQDAYALCRVFKKTAPGPK).

In terms of tissue distribution, expressed in leaves, roots and flowers.

It is found in the nucleus. In terms of biological role, transcription factor that functions as a regulator of the jasmonate (JA) signaling pathway. May regulate the expression of genes encoding JA biosynthetic enzymes, such as lipoxygenase 7 (CM-LOX1), allene oxide synthase 2 (AOS2) and OPDA reductase 7 (OPR7). Involved in abscisic acid-induced leaf senescence. Activates the abscisic acid (ABA) signaling-associated gene ABI5 and the senescence-associated gene NYC1 by directly binding to the mitochondrial dysfunction motif (MDM) present in their promoters. Possesses transcriptional activator activity in yeast. Required for the multiplication of the rice dwarf virus (RDV). In Oryza sativa subsp. japonica (Rice), this protein is NAC domain-containing protein 54.